A 490-amino-acid chain; its full sequence is GTPase Der (490 aa).

EngA-type G domains follow at residues 3–166 (PVVA…MEDL) and 203–376 (IKLA…DSST). Residues 9 to 16 (GRPNVGKS), 56 to 60 (DTGGI), 118 to 121 (NKID), 209 to 216 (GRPNVGKS), 256 to 260 (DTAGV), and 321 to 324 (NKWD) each bind GTP. Residues 377 to 461 (RRVGTSMLTR…PIRIQFKEGE (85 aa)) enclose the KH-like domain.

It belongs to the TRAFAC class TrmE-Era-EngA-EngB-Septin-like GTPase superfamily. EngA (Der) GTPase family. As to quaternary structure, associates with the 50S ribosomal subunit.

GTPase that plays an essential role in the late steps of ribosome biogenesis. The chain is GTPase Der from Shigella boydii serotype 18 (strain CDC 3083-94 / BS512).